The primary structure comprises 611 residues: MASVQQGEKQLFEKFWRGTFKAVATPRPESIIVASITARKPLPRTEPQNNPVVPAQDGPSEKLGQHLATEPLGTNSWERDKTCRELGATRGHSASHDKDLTPPPSSRGKKKKKKSTRKKRRRSSSYSPSPVKKKKKKSSKKHKRRRSFSKKRRHSSSSPKSKRRDEKRHKKQSRSRPRKSHRHRHHRCPSRSQSSESRPSSCESRHRGRSPEEGQKSRRRHSRRCSKTLCKDSPEAQSSRPPSQPLQMLGYLSARGVITGSGSAADLFTKTASPLTTSRGRSQEYDSGNDTSSPPSTQTSSARSRGQEKGSPSGGLSKSRELNSGNTSDSGNSFTTSSPQNKGAMLENLSPTSRGRESRGFQSPCLECAEVKKSSLVPSTARSSPMKGCSRSSSYASTRSSSHSSRSPNPRASPRYTQSRSTSSEKRSYSRSPSYSSKSGKRSPPSRSSRSRRSPSYSRYSPSRERDPKYSEKDSQQRERERARRRRRSYSPMRKRRRDSPSHLEARRITSARKRPIPYYRPSPSSSGSLSSTSSWYSSSSSRSASRSYSRSRSRSRSRRRSRTRTSSSSSSRSPSPGSRSRSRSRSRSRSRSRSQSRSYSSADSYSSTRR.

Disordered stretches follow at residues 38–248 (ARKP…PLQM) and 263–611 (SAAD…STRR). Composition is skewed to basic residues over residues 107–123 (RGKK…RRRS) and 131–189 (VKKK…HRCP). The segment covering 190–202 (SRSQSSESRPSSC) has biased composition (low complexity). A compositionally biased stretch (basic and acidic residues) spans 203–216 (ESRHRGRSPEEGQK). The span at 217–226 (SRRRHSRRCS) shows a compositional bias: basic residues. Polar residues predominate over residues 270-290 (KTASPLTTSRGRSQEYDSGND). Residues 291–301 (TSSPPSTQTSS) show a composition bias toward low complexity. Positions 322-341 (LNSGNTSDSGNSFTTSSPQN) are enriched in polar residues. 2 stretches are compositionally biased toward low complexity: residues 390–422 (SRSS…SRST) and 430–461 (SRSP…SRYS). Over residues 462–482 (PSRERDPKYSEKDSQQRERER) the composition is skewed to basic and acidic residues. The span at 483–498 (ARRRRRSYSPMRKRRR) shows a compositional bias: basic residues. A compositionally biased stretch (basic and acidic residues) spans 499 to 508 (DSPSHLEARR). Low complexity predominate over residues 522-549 (PSPSSSGSLSSTSSWYSSSSSRSASRSY). Over residues 550–564 (SRSRSRSRSRRRSRT) the composition is skewed to basic residues. Low complexity predominate over residues 565–580 (RTSSSSSSRSPSPGSR). A compositionally biased stretch (basic residues) spans 581–595 (SRSRSRSRSRSRSRS). The segment covering 596 to 611 (QSRSYSSADSYSSTRR) has biased composition (low complexity).

Belongs to the nSR100 family. Phosphorylated. As to expression, specifically expressed in neuronal cells (at protein level). Expressed in the cerebellum.

It is found in the nucleus. In terms of biological role, splicing factor specifically required for neural cell differentiation. Acts in conjunction with nPTB/PTBP2 by binding directly to its regulated target transcripts and promotes neural-specific exon inclusion in many genes that function in neural cell differentiation. Required to promote the inclusion of neural-specific exon 10 in nPTB/PTBP2, leading to increased expression of neural-specific nPTB/PTBP2. Also promotes the inclusion of exon 16 in DAAM1 in neuron extracts. Promotes alternative splicing of REST transcripts to produce REST isoform 3 (REST4) with greatly reduced repressive activity, thereby activating expression of REST targets in neural cells. Plays an important role during embryonic development as well as in the proper functioning of the adult nervous system. Regulates alternative splicing events in genes with important neuronal functions. This Homo sapiens (Human) protein is Serine/arginine repetitive matrix protein 4 (SRRM4).